The following is a 429-amino-acid chain: Glutamate-1-semialdehyde 2,1-aminomutase (429 aa).

Lysine 267 carries the N6-(pyridoxal phosphate)lysine modification.

The protein belongs to the class-III pyridoxal-phosphate-dependent aminotransferase family. HemL subfamily. Homodimer. Requires pyridoxal 5'-phosphate as cofactor.

It is found in the cytoplasm. The catalysed reaction is (S)-4-amino-5-oxopentanoate = 5-aminolevulinate. It participates in porphyrin-containing compound metabolism; protoporphyrin-IX biosynthesis; 5-aminolevulinate from L-glutamyl-tRNA(Glu): step 2/2. This Xanthomonas axonopodis pv. citri (strain 306) protein is Glutamate-1-semialdehyde 2,1-aminomutase.